Reading from the N-terminus, the 101-residue chain is Gastrin (101 aa).

An N-terminal signal peptide occupies residues 1–21 (MPRLCVYMLVLVLALATFSEA). The disordered stretch occupies residues 23–101 (WKPRSQLQDA…FGRRSAEEDQ (79 aa)). A compositionally biased stretch (polar residues) spans 25–37 (PRSQLQDASSGPG). Tyrosine 87 is modified (sulfotyrosine). Phenylalanine 92 carries the post-translational modification Phenylalanine amide. Positions 92-101 (FGRRSAEEDQ) are enriched in basic and acidic residues. A Phosphoserine modification is found at serine 96. A propeptide spanning residues 96–101 (SAEEDQ) is cleaved from the precursor.

Belongs to the gastrin/cholecystokinin family. Post-translationally, sulfation enhances proteolytic processing, and blocks peptide degradation. Levels of sulfation differ between proteolytically-cleaved gastrins and between tissues. As to expression, abundantly expressed in the stomach and duodenum. Low levels in brain, ovary and pancreas.

It is found in the secreted. Gastrin stimulates the stomach mucosa to produce and secrete hydrochloric acid and the pancreas to secrete its digestive enzymes. It also stimulates smooth muscle contraction and increases blood circulation and water secretion in the stomach and intestine. This is Gastrin (Gast) from Mus musculus (Mouse).